Here is a 614-residue protein sequence, read N- to C-terminus: Zinc metalloproteinase dpy-31 (614 aa).

Residues 1–24 (MSLLRCTTLLLVVVAIALPPCILG) form the signal peptide. Residues 25-150 (YSLHDGSRLD…KTGQRRVKRK (126 aa)) constitute a propeptide that is removed on maturation. Residues 150–349 (KFIGSDLRRW…IRLMNKIYCS (200 aa)) form the Peptidase M12A domain. Asparagine 190 carries an N-linked (GlcNAc...) asparagine glycan. 5 disulfides stabilise this stretch: cysteine 193–cysteine 348, cysteine 216–cysteine 237, cysteine 352–cysteine 372, cysteine 374–cysteine 383, and cysteine 394–cysteine 422. Histidine 245 contributes to the Zn(2+) binding site. Residue glutamate 246 is part of the active site. Histidine 249 and histidine 255 together coordinate Zn(2+). The region spanning 344 to 384 (NKIYCSNVCSRKLPCQRGGYTDPRRCDRCRCPDGFTGQFCE) is the EGF-like domain. Positions 394 to 510 (CGGRIQVNGG…RGFEARARAL (117 aa)) constitute a CUB domain. Asparagine 461 carries N-linked (GlcNAc...) asparagine glycosylation. The region spanning 513 to 562 (NGQWASWSPWTPCTASCGACGSRMRTRVCSHGACAGEPVENQVCNTHPCN) is the TSP type-1 domain. Intrachain disulfides connect cysteine 525–cysteine 556, cysteine 529–cysteine 561, and cysteine 541–cysteine 546.

Zn(2+) is required as a cofactor.

The protein resides in the secreted. Its activity is regulated as follows. Inhibited by marimastat and tripeptide hydroxamic acids. Inhibited by 1,10-phenanthroline. Metalloprotease which cleaves the carboxyl terminus of procollagens to mature collagens. Probably involved in cuticular collagen maturation. This is Zinc metalloproteinase dpy-31 from Teladorsagia circumcincta (Brown stomach worm).